The following is a 294-amino-acid chain: FAD-dependent monooxygenase SAT1 (294 aa).

Residue D108 coordinates FAD.

The protein belongs to the paxM FAD-dependent monooxygenase family. Requires FAD as cofactor.

The protein operates within mycotoxin biosynthesis. Functionally, FAD-dependent monooxygenase; part of the satratoxin SC1 cluster involved in the biosynthesis of satratoxins, trichothecene mycotoxins that are associated with human food poisonings. Satratoxins are suggested to be made by products of multiple gene clusters (SC1, SC2 and SC3) that encode 21 proteins in all, including polyketide synthases, acetyltransferases, and other enzymes expected to modify the trichothecene skeleton. SC1 encodes 10 proteins, SAT1 to SAT10. The largest are SAT8, which encodes a putative polyketide synthase (PKS) with a conventional non-reducing architecture, and SAT10, a putative protein containing four ankyrin repeats and thus may be involved in protein scaffolding. The putative short-chain reductase SAT3 may assist the PKS in some capacity. SAT6 contains a secretory lipase domain and acts probably as a trichothecene esterase. SAT5 encodes a putative acetyltransferase, and so, with SAT6, may affect endogenous protection from toxicity. The probable transcription factor SAT9 may regulate the expression of the SC1 cluster. SC2 encodes proteins SAT11 to SAT16, the largest of which encodes the putative reducing PKS SAT13. SAT11 is a cytochrome P450 monooxygenase, while SAT14 and SAT16 are probable acetyltransferases. The SC2 cluster may be regulated by the transcription factor SAT15. SC3 is a small cluster that encodes 5 proteins, SAT17 to SAT21. SAT21 is a putative MFS-type transporter which may have a role in exporting secondary metabolites. The four other proteins putatively encoded in SC3 include the taurine hydroxylase-like protein SAT17, the O-methyltransferase SAT18, the acetyltransferase SAT19, and the Cys6-type zinc finger SAT20, the latter being probably involved in regulation of SC3 expression. This Stachybotrys chartarum (strain CBS 109288 / IBT 7711) (Toxic black mold) protein is FAD-dependent monooxygenase SAT1.